Here is a 224-residue protein sequence, read N- to C-terminus: MAAQNQSAQKDLEIQVKAPDGKVDGSVVLPAELFDVPANIALMHQVVTAQRAAARQGTHSTKTRGDVSGGGRKPYRQKGTGRARQGSTRTPQFTGGGVVHGPKPRDYSQRTPKKMIAAALRGALSDRARNGRIHAVTELVAGQTPSTKSAKTFLATITDRKQVLVVIGRDDQTGVKSVRNLPGVHILSPDQLNTYDVLRADDVVFSVEALNAYIAANTSEEVSA.

The segment at 52–109 (AAARQGTHSTKTRGDVSGGGRKPYRQKGTGRARQGSTRTPQFTGGGVVHGPKPRDYSQ) is disordered.

It belongs to the universal ribosomal protein uL4 family. Part of the 50S ribosomal subunit.

Functionally, one of the primary rRNA binding proteins, this protein initially binds near the 5'-end of the 23S rRNA. It is important during the early stages of 50S assembly. It makes multiple contacts with different domains of the 23S rRNA in the assembled 50S subunit and ribosome. Its function is as follows. Forms part of the polypeptide exit tunnel. This Mycobacterium ulcerans (strain Agy99) protein is Large ribosomal subunit protein uL4.